A 793-amino-acid polypeptide reads, in one-letter code: PC3-like endoprotease variant A (793 aa).

A signal peptide spans 1–29 (MNYRGIYRRRYVFVLLLLVAVVNISYGWT). A propeptide spanning residues 30 to 152 (VLKNKDYKRR…QQKILERVKR (123 aa)) is cleaved from the precursor. N-linked (GlcNAc...) asparagine glycosylation is found at Asn62 and Asn190. Residues 164-486 (MWYLLNTGQA…FGRLDANAMV (323 aa)) enclose the Peptidase S8 domain. Residues Asp202 and His242 each act as charge relay system in the active site. 2 cysteine pairs are disulfide-bonded: Cys259–Cys411 and Cys351–Cys381. Residue Ser419 is the Charge relay system of the active site. One can recognise a P/Homo B domain in the interval 495–638 (LPAQRKCTAA…EERVIDTQTK (144 aa)). Cys501 and Cys527 are joined by a disulfide.

This sequence belongs to the peptidase S8 family. Furin subfamily. As to expression, predominantly in the body column.

Functionally, probably involved in the processing of hormone and other protein precursors at sites comprised of pairs of basic amino acid residues. The polypeptide is PC3-like endoprotease variant A (Hydra vulgaris (Hydra)).